Consider the following 206-residue polypeptide: Pyridoxine/pyridoxamine 5'-phosphate oxidase (206 aa).

Residues 53-58 (RMVLLK), 68-69 (YT), Lys-75, and Gln-97 contribute to the FMN site. Lys-58 provides a ligand contact to substrate. Substrate is bound by residues Tyr-115, Arg-119, and Ser-123. Residues 132–133 (QS) and Trp-177 each bind FMN. 183 to 185 (RLH) contacts substrate. FMN is bound at residue Arg-187.

The protein belongs to the pyridoxamine 5'-phosphate oxidase family. Homodimer. Requires FMN as cofactor.

It catalyses the reaction pyridoxamine 5'-phosphate + O2 + H2O = pyridoxal 5'-phosphate + H2O2 + NH4(+). The enzyme catalyses pyridoxine 5'-phosphate + O2 = pyridoxal 5'-phosphate + H2O2. It participates in cofactor metabolism; pyridoxal 5'-phosphate salvage; pyridoxal 5'-phosphate from pyridoxamine 5'-phosphate: step 1/1. The protein operates within cofactor metabolism; pyridoxal 5'-phosphate salvage; pyridoxal 5'-phosphate from pyridoxine 5'-phosphate: step 1/1. Catalyzes the oxidation of either pyridoxine 5'-phosphate (PNP) or pyridoxamine 5'-phosphate (PMP) into pyridoxal 5'-phosphate (PLP). The protein is Pyridoxine/pyridoxamine 5'-phosphate oxidase of Rhizobium etli (strain ATCC 51251 / DSM 11541 / JCM 21823 / NBRC 15573 / CFN 42).